A 293-amino-acid chain; its full sequence is Nitrogenase iron protein (293 aa).

10 to 17 (GKGGIGKS) provides a ligand contact to ATP. C98 is a [4Fe-4S] cluster binding site. ADP-ribosylarginine; by dinitrogenase reductase ADP-ribosyltransferase is present on R101. C133 serves as a coordination point for [4Fe-4S] cluster.

It belongs to the NifH/BchL/ChlL family. As to quaternary structure, homodimer. It depends on [4Fe-4S] cluster as a cofactor. Post-translationally, the reversible ADP-ribosylation of Arg-101 inactivates the nitrogenase reductase and regulates nitrogenase activity.

It carries out the reaction N2 + 8 reduced [2Fe-2S]-[ferredoxin] + 16 ATP + 16 H2O = H2 + 8 oxidized [2Fe-2S]-[ferredoxin] + 2 NH4(+) + 16 ADP + 16 phosphate + 6 H(+). Its function is as follows. The key enzymatic reactions in nitrogen fixation are catalyzed by the nitrogenase complex, which has 2 components: the iron protein and the molybdenum-iron protein. This is Nitrogenase iron protein from Klebsiella pneumoniae (strain 342).